A 381-amino-acid polypeptide reads, in one-letter code: S-adenosylmethionine synthase (381 aa).

An ATP-binding site is contributed by His-15. Residue Asp-17 coordinates Mg(2+). Position 43 (Glu-43) interacts with K(+). 2 residues coordinate L-methionine: Glu-56 and Gln-99. The segment at 99–109 (QSLDIAQGVDN) is flexible loop. ATP is bound by residues 164–166 (DGK), 230–231 (RF), Asp-239, 245–246 (RK), and Lys-266. L-methionine is bound at residue Asp-239. Lys-270 serves as a coordination point for L-methionine.

Belongs to the AdoMet synthase family. Homotetramer; dimer of dimers. Requires Mg(2+) as cofactor. K(+) serves as cofactor.

The protein localises to the cytoplasm. The catalysed reaction is L-methionine + ATP + H2O = S-adenosyl-L-methionine + phosphate + diphosphate. It functions in the pathway amino-acid biosynthesis; S-adenosyl-L-methionine biosynthesis; S-adenosyl-L-methionine from L-methionine: step 1/1. In terms of biological role, catalyzes the formation of S-adenosylmethionine (AdoMet) from methionine and ATP. The overall synthetic reaction is composed of two sequential steps, AdoMet formation and the subsequent tripolyphosphate hydrolysis which occurs prior to release of AdoMet from the enzyme. In Legionella jeonii, this protein is S-adenosylmethionine synthase.